The sequence spans 255 residues: Short chain dehydrogenase adrF (255 aa).

5 residues coordinate NADP(+): Ile-11, Arg-118, Tyr-150, Lys-154, and Val-183. Tyr-150 (proton acceptor) is an active-site residue. Lys-154 (lowers pKa of active site Tyr) is an active-site residue.

It belongs to the short-chain dehydrogenases/reductases (SDR) family.

It participates in secondary metabolite biosynthesis; terpenoid biosynthesis. Functionally, short chain dehydrogenase; part of the gene cluster that mediates the biosynthesis of andrastins, meroterpenoid compounds that exhibit inhibitory activity against ras farnesyltransferase, suggesting that they could be promising leads for antitumor agents. The first step of the pathway is the synthesis of 3,5-dimethylorsellinic acid (DMOA) by the polyketide synthase adrD via condensation of one acetyl-CoA starter unit with 3 malonyl-CoA units and 2 methylations. DMAO is then converted to farnesyl-DMAO by the prenyltransferase adrG. The methyltransferase adrK catalyzes the methylation of the carboxyl group of farnesyl-DMAO to farnesyl-DMAO methyl ester which is further converted to epoxyfarnesyl-DMAO methyl ester by the FAD-dependent monooxygenase adrH. The terpene cyclase adrI then catalyzes the carbon skeletal rearrangement to generate the andrastin E, the first compound in the pathway having the andrastin scaffold, with the tetracyclic ring system. The post-cyclization tailoring enzymes adrF, adrE, adrJ, and adrA, are involved in the conversion of andrastin E into andrastin A. The short chain dehydrogenase adrF is responsible for the oxidation of the C-3 a hydroxyl group of andrastin E to yield the corresponding ketone, andrastin D. The ketoreductase adrE stereoselectively reduces the carbonyl moiety to reverse the stereochemistry of the C-3 position to yield andrastin F. The acetyltransferase adrJ is the acetyltransferase that attaches the acetyl group to the C-3 hydroxyl group of andrastin F to yield andrastin C. Finally, the cytochrome P450 monooxygenase adrA catalyzes two sequential oxidation reactions of the C-23 methyl group, to generate the corresponding alcohol andrastin B, and aldehyde andrastin A. The sequence is that of Short chain dehydrogenase adrF from Penicillium rubens (strain ATCC 28089 / DSM 1075 / NRRL 1951 / Wisconsin 54-1255) (Penicillium chrysogenum).